A 380-amino-acid polypeptide reads, in one-letter code: Erythronate-4-phosphate dehydrogenase (380 aa).

Residues Ser-45 and Thr-66 each contribute to the substrate site. Residues 126–127 (QV), Asp-146, Thr-175, 206–208 (ASR), and Asp-232 contribute to the NAD(+) site. Arg-208 is an active-site residue. Glu-237 is an active-site residue. Catalysis depends on His-254, which acts as the Proton donor. Gly-257 serves as a coordination point for NAD(+). Tyr-258 contributes to the substrate binding site.

It belongs to the D-isomer specific 2-hydroxyacid dehydrogenase family. PdxB subfamily. In terms of assembly, homodimer.

The protein resides in the cytoplasm. The enzyme catalyses 4-phospho-D-erythronate + NAD(+) = (R)-3-hydroxy-2-oxo-4-phosphooxybutanoate + NADH + H(+). The protein operates within cofactor biosynthesis; pyridoxine 5'-phosphate biosynthesis; pyridoxine 5'-phosphate from D-erythrose 4-phosphate: step 2/5. Catalyzes the oxidation of erythronate-4-phosphate to 3-hydroxy-2-oxo-4-phosphonooxybutanoate. The sequence is that of Erythronate-4-phosphate dehydrogenase from Pseudomonas paraeruginosa (strain DSM 24068 / PA7) (Pseudomonas aeruginosa (strain PA7)).